Consider the following 546-residue polypeptide: Arginine--tRNA ligase (546 aa).

A 'HIGH' region motif is present at residues 122–132 (ANPTGPFTVGH).

It belongs to the class-I aminoacyl-tRNA synthetase family. In terms of assembly, monomer.

Its subcellular location is the cytoplasm. It carries out the reaction tRNA(Arg) + L-arginine + ATP = L-arginyl-tRNA(Arg) + AMP + diphosphate. The polypeptide is Arginine--tRNA ligase (argS) (Thermotoga maritima (strain ATCC 43589 / DSM 3109 / JCM 10099 / NBRC 100826 / MSB8)).